The chain runs to 83 residues: Short neurotoxin 1 (83 aa).

Positions 1–21 are cleaved as a signal peptide; it reads MKTLLLTLVVVTIVCLDLGYT. 4 disulfide bridges follow: cysteine 24-cysteine 45, cysteine 38-cysteine 62, cysteine 64-cysteine 75, and cysteine 76-cysteine 81.

It belongs to the three-finger toxin family. Short-chain subfamily. Type I alpha-neurotoxin sub-subfamily. As to expression, expressed by the venom gland.

It is found in the secreted. Binds to muscle nicotinic acetylcholine receptor (nAChR) and inhibit acetylcholine from binding to the receptor, thereby impairing neuromuscular transmission. The polypeptide is Short neurotoxin 1 (Oxyuranus scutellatus scutellatus (Australian taipan)).